The primary structure comprises 291 residues: 4-hydroxy-tetrahydrodipicolinate synthase (291 aa).

Pyruvate is bound at residue Thr45. The Proton donor/acceptor role is filled by Tyr133. Lys161 (schiff-base intermediate with substrate) is an active-site residue. Ile203 is a pyruvate binding site.

It belongs to the DapA family. In terms of assembly, homotetramer; dimer of dimers.

It localises to the cytoplasm. The enzyme catalyses L-aspartate 4-semialdehyde + pyruvate = (2S,4S)-4-hydroxy-2,3,4,5-tetrahydrodipicolinate + H2O + H(+). It participates in amino-acid biosynthesis; L-lysine biosynthesis via DAP pathway; (S)-tetrahydrodipicolinate from L-aspartate: step 3/4. In terms of biological role, catalyzes the condensation of (S)-aspartate-beta-semialdehyde [(S)-ASA] and pyruvate to 4-hydroxy-tetrahydrodipicolinate (HTPA). The sequence is that of 4-hydroxy-tetrahydrodipicolinate synthase from Saccharophagus degradans (strain 2-40 / ATCC 43961 / DSM 17024).